The chain runs to 297 residues: Protease HtpX homolog (297 aa).

The next 2 helical transmembrane spans lie at 5-25 and 43-63; these read IFLF…VLTI and LMAL…ISLG. Histidine 154 lines the Zn(2+) pocket. Residue glutamate 155 is part of the active site. Histidine 158 is a Zn(2+) binding site. Helical transmembrane passes span 169–189 and 203–223; these read LLQG…AWVA and FIAM…VVFA. Glutamate 229 provides a ligand contact to Zn(2+).

Belongs to the peptidase M48B family. Zn(2+) serves as cofactor.

The protein resides in the cell membrane. This Bacillus velezensis (strain DSM 23117 / BGSC 10A6 / LMG 26770 / FZB42) (Bacillus amyloliquefaciens subsp. plantarum) protein is Protease HtpX homolog.